The chain runs to 425 residues: Terminal nucleotidyltransferase 5B (425 aa).

A disordered region spans residues 1–42 (MMPSESGAERRDRAAAQVGTAAATAVATAAPAGGGPDPEALS). The span at 15 to 31 (AAQVGTAAATAVATAAP) shows a compositional bias: low complexity.

The protein belongs to the TENT family.

Its subcellular location is the cytoplasm. It is found in the nucleus. The enzyme catalyses RNA(n) + ATP = RNA(n)-3'-adenine ribonucleotide + diphosphate. Its function is as follows. Catalyzes the transfer of one adenosine molecule from an ATP to an mRNA poly(A) tail bearing a 3'-OH terminal group in an ATP hydrolysis-dependent manner. May be involved in maintaining the translation efficiency of at least some genes through preventing degradation of their mRNAs. Prefers RNA molecules that are adenosine-rich close to 3'-end. In addition, may inhibit cell proliferation and cell cycle progression through ubiquitination of beta-catenin/CTNNB1. The chain is Terminal nucleotidyltransferase 5B from Homo sapiens (Human).